The following is a 142-amino-acid chain: Putative pre-16S rRNA nuclease (142 aa).

The protein belongs to the YqgF nuclease family.

Its subcellular location is the cytoplasm. Its function is as follows. Could be a nuclease involved in processing of the 5'-end of pre-16S rRNA. This is Putative pre-16S rRNA nuclease from Prosthecochloris aestuarii (strain DSM 271 / SK 413).